The sequence spans 111 residues: UPF0122 protein CKR_1296 (111 aa).

Belongs to the UPF0122 family.

Functionally, might take part in the signal recognition particle (SRP) pathway. This is inferred from the conservation of its genetic proximity to ftsY/ffh. May be a regulatory protein. This chain is UPF0122 protein CKR_1296, found in Clostridium kluyveri (strain NBRC 12016).